The sequence spans 319 residues: Thymidylate synthase (319 aa).

DUMP contacts are provided by residues Arg-25 and 181 to 182 (RR). Catalysis depends on Cys-201, which acts as the Nucleophile. DUMP-binding positions include 221 to 224 (RSAD), Asn-232, and 262 to 264 (HIY). Residue Asp-224 participates in (6R)-5,10-methylene-5,6,7,8-tetrahydrofolate binding. (6R)-5,10-methylene-5,6,7,8-tetrahydrofolate is bound at residue Ala-318.

Belongs to the thymidylate synthase family. Bacterial-type ThyA subfamily. As to quaternary structure, homodimer.

The protein localises to the cytoplasm. It carries out the reaction dUMP + (6R)-5,10-methylene-5,6,7,8-tetrahydrofolate = 7,8-dihydrofolate + dTMP. The protein operates within pyrimidine metabolism; dTTP biosynthesis. Functionally, catalyzes the reductive methylation of 2'-deoxyuridine-5'-monophosphate (dUMP) to 2'-deoxythymidine-5'-monophosphate (dTMP) while utilizing 5,10-methylenetetrahydrofolate (mTHF) as the methyl donor and reductant in the reaction, yielding dihydrofolate (DHF) as a by-product. This enzymatic reaction provides an intracellular de novo source of dTMP, an essential precursor for DNA biosynthesis. This is Thymidylate synthase from Oenococcus oeni (strain ATCC BAA-331 / PSU-1).